Consider the following 342-residue polypeptide: C-X-C chemokine receptor type 6 (342 aa).

Residues 1-32 lie on the Extracellular side of the membrane; sequence MAEHDYHEDYGLNSFNDSSQEEHQDFLQFRKV. Asn-16 is a glycosylation site (N-linked (GlcNAc...) asparagine). Residues 33–59 form a helical membrane-spanning segment; it reads FLPCMYLVVFVCGLVGNSLVLVISIFY. The Cytoplasmic segment spans residues 60 to 68; the sequence is HKLQSLTDV. A helical membrane pass occupies residues 69–89; that stretch reads FLVNLPLADLVFVCTLPFWAY. Residues 90–103 lie on the Extracellular side of the membrane; that stretch reads AGIHEWIFGQVMCK. An intrachain disulfide couples Cys-102 to Cys-180. The helical transmembrane segment at 104-125 threads the bilayer; sequence TLLGVYTINFYTSMLILTCITV. Residues 126 to 143 are Cytoplasmic-facing; that stretch reads DRFIVVVKATKAYNQQAK. Residues 144–164 traverse the membrane as a helical segment; that stretch reads RMTWGKVICLLIWVISLLVSL. At 165 to 187 the chain is on the extracellular side; it reads PQIIYGNVFNLDKLICGYHDKEI. Residues 188–215 traverse the membrane as a helical segment; that stretch reads STVVLATQMTLGFFLPLLAMIVCYSVII. Residues 216–231 lie on the Cytoplasmic side of the membrane; that stretch reads KTLLHAGGFQKHRSLK. A helical membrane pass occupies residues 232-259; that stretch reads IIFLVMAVFLLTQTPFNLVKLIRSTHWE. The Extracellular segment spans residues 260–275; that stretch reads YYAMTSFHYTIIVTEA. The helical transmembrane segment at 276 to 293 threads the bilayer; the sequence is IAYLRACLNPVLYAFVSL. Residues 294–342 lie on the Cytoplasmic side of the membrane; that stretch reads KFRKNFWKLVKDIGCLPYLGVSHQWKSSEDNSKTFSASHNVEATSMFQL.

It belongs to the G-protein coupled receptor 1 family.

The protein localises to the cell membrane. Functionally, receptor for the C-X-C chemokine CXCL16. Used as a coreceptor by SIVs and by strains of HIV-2 and m-tropic HIV-1. The protein is C-X-C chemokine receptor type 6 (CXCR6) of Macaca nemestrina (Pig-tailed macaque).